We begin with the raw amino-acid sequence, 254 residues long: Demethylmenaquinone methyltransferase (254 aa).

S-adenosyl-L-methionine is bound by residues Thr-62, Asp-80, 122 to 123, and Ser-139; that span reads DG.

This sequence belongs to the class I-like SAM-binding methyltransferase superfamily. MenG/UbiE family.

It catalyses the reaction a 2-demethylmenaquinol + S-adenosyl-L-methionine = a menaquinol + S-adenosyl-L-homocysteine + H(+). Its pathway is quinol/quinone metabolism; menaquinone biosynthesis; menaquinol from 1,4-dihydroxy-2-naphthoate: step 2/2. Its function is as follows. Methyltransferase required for the conversion of demethylmenaquinol (DMKH2) to menaquinol (MKH2). The protein is Demethylmenaquinone methyltransferase of Parafrankia sp. (strain EAN1pec).